A 469-amino-acid chain; its full sequence is 3-isopropylmalate dehydratase large subunit (469 aa).

[4Fe-4S] cluster-binding residues include C347, C408, and C411.

This sequence belongs to the aconitase/IPM isomerase family. LeuC type 1 subfamily. As to quaternary structure, heterodimer of LeuC and LeuD. [4Fe-4S] cluster is required as a cofactor.

It catalyses the reaction (2R,3S)-3-isopropylmalate = (2S)-2-isopropylmalate. It participates in amino-acid biosynthesis; L-leucine biosynthesis; L-leucine from 3-methyl-2-oxobutanoate: step 2/4. Functionally, catalyzes the isomerization between 2-isopropylmalate and 3-isopropylmalate, via the formation of 2-isopropylmaleate. The polypeptide is 3-isopropylmalate dehydratase large subunit (Actinobacillus pleuropneumoniae serotype 3 (strain JL03)).